We begin with the raw amino-acid sequence, 578 residues long: Arginine--tRNA ligase (578 aa).

A 'HIGH' region motif is present at residues 127-137; the sequence is PNLAKEMHVGH.

This sequence belongs to the class-I aminoacyl-tRNA synthetase family. In terms of assembly, monomer.

It localises to the cytoplasm. It carries out the reaction tRNA(Arg) + L-arginine + ATP = L-arginyl-tRNA(Arg) + AMP + diphosphate. In Pseudomonas entomophila (strain L48), this protein is Arginine--tRNA ligase.